Here is a 348-residue protein sequence, read N- to C-terminus: A-type ATP synthase subunit C (348 aa).

The protein belongs to the V-ATPase V0D/AC39 subunit family. Has multiple subunits with at least A(3), B(3), C, D, E, F, H, I and proteolipid K(x).

The protein localises to the cell membrane. Functionally, component of the A-type ATP synthase that produces ATP from ADP in the presence of a proton gradient across the membrane. The chain is A-type ATP synthase subunit C from Halorubrum lacusprofundi (strain ATCC 49239 / DSM 5036 / JCM 8891 / ACAM 34).